A 346-amino-acid chain; its full sequence is 3 beta-hydroxysteroid dehydrogenase/Delta 5--&gt;4-isomerase (346 aa).

Y147 (proton acceptor) is an active-site residue. Residue K151 coordinates NAD(+).

It belongs to the 3-beta-HSD family.

It catalyses the reaction a 3beta-hydroxy-Delta(5)-steroid + NAD(+) = a 3-oxo-Delta(5)-steroid + NADH + H(+). It carries out the reaction a 3-oxo-Delta(5)-steroid = a 3-oxo-Delta(4)-steroid. The protein operates within lipid metabolism; steroid biosynthesis. Functionally, catalyzes the oxidative conversion of Delta(5)-ene-3-beta-hydroxy steroid, and the oxidative conversion of ketosteroids. The 3-beta-HSD enzymatic system plays a crucial role in the biosynthesis of all classes of hormonal steroids. During viral infection, steroid production contributes to virulence by inhibiting the host inflammatory response. The polypeptide is 3 beta-hydroxysteroid dehydrogenase/Delta 5--&gt;4-isomerase (OPG174) (Homo sapiens (Human)).